The sequence spans 424 residues: Serine hydroxymethyltransferase (424 aa).

(6S)-5,6,7,8-tetrahydrofolate-binding positions include leucine 119 and 123–125 (GHL). Position 228 is an N6-(pyridoxal phosphate)lysine (lysine 228). Residue 353-355 (SAF) coordinates (6S)-5,6,7,8-tetrahydrofolate.

Belongs to the SHMT family. Homodimer. Pyridoxal 5'-phosphate serves as cofactor.

It is found in the cytoplasm. The catalysed reaction is (6R)-5,10-methylene-5,6,7,8-tetrahydrofolate + glycine + H2O = (6S)-5,6,7,8-tetrahydrofolate + L-serine. It participates in one-carbon metabolism; tetrahydrofolate interconversion. The protein operates within amino-acid biosynthesis; glycine biosynthesis; glycine from L-serine: step 1/1. Functionally, catalyzes the reversible interconversion of serine and glycine with tetrahydrofolate (THF) serving as the one-carbon carrier. Also exhibits THF-independent aldolase activity toward beta-hydroxyamino acids, producing glycine and aldehydes, via a retro-aldol mechanism. This chain is Serine hydroxymethyltransferase, found in Natronomonas pharaonis (strain ATCC 35678 / DSM 2160 / CIP 103997 / JCM 8858 / NBRC 14720 / NCIMB 2260 / Gabara) (Halobacterium pharaonis).